A 597-amino-acid chain; its full sequence is MSSSEVLAPEAYIDDSISFESLQLDTRLLQAIKRNGFKNPTLIQSHAIPLALQEKRDIIAKAATGCGKTLAYLIPVIQTILDYKKTNTDKIDGTSNTLGIILVPTRELAQQVNDVLDKMILYCSNDIRSLNISSDMPSSVLTSLLLEKPEIIIATPGKLMTLLDTNVESVSLEELKFLVIDEVDLVLTFGYKEDLSKIAEYLPLKKNLQTFLMSATLNDDIQELKKEFCRAPAILKFNDDEISKDKNKLIQYYVKTSEFDKFLLCYVIFKLGLIKGKTLIFVNNIDRGYRLKLVLEQFGIKSCILNSELPANSRQHIVDQFNKNVYHLLIATDDTEYIKEEDEENDDEIETNSEEQDKVEDSNDTKDKKGKKASKIKKDKEFGVSRGVDFQNVACVLNFDLPTTAKSYVHRIGRTARAGKTGTAISFVVPLKEFGKHKPSMYQSTKRDEKILSRIIKQQSKLGLELQPYSFDTKQIEGFRYRMEDGFRAVTQVAIREARVKELKDELLASEKLKRHFEENPQELQSLRHDKELHPSRVQQHLKRVPDYLLPAEAREGKKKVGFVPFHSVKKSNRHKKNNKVFKKRSGSKSDPLKNFK.

Residues Ile-17–Ser-45 carry the Q motif motif. One can recognise a Helicase ATP-binding domain in the interval Pro-49–Leu-235. Ala-62–Thr-69 provides a ligand contact to ATP. The DEAD box signature appears at Asp-181–Asp-184. Residues Lys-248–Glu-477 form the Helicase C-terminal domain. Over residues Glu-340–Glu-354 the composition is skewed to acidic residues. Disordered regions lie at residues Glu-340–Ala-373, Pro-521–Gln-540, and Val-561–Lys-597. Composition is skewed to basic and acidic residues over residues Glu-355 to Asp-367 and Ser-526 to Pro-535. Over residues Ser-568–Gly-587 the composition is skewed to basic residues.

Belongs to the DEAD box helicase family. DDX56/DBP9 subfamily.

The protein localises to the nucleus. The protein resides in the nucleolus. It carries out the reaction ATP + H2O = ADP + phosphate + H(+). ATP-binding RNA helicase involved in the biogenesis of 60S ribosomal subunits and is required for the normal formation of 25S and 5.8S rRNAs. The sequence is that of ATP-dependent RNA helicase DBP9 (DBP9) from Vanderwaltozyma polyspora (strain ATCC 22028 / DSM 70294 / BCRC 21397 / CBS 2163 / NBRC 10782 / NRRL Y-8283 / UCD 57-17) (Kluyveromyces polysporus).